We begin with the raw amino-acid sequence, 397 residues long: NADH-quinone oxidoreductase subunit D (397 aa).

It belongs to the complex I 49 kDa subunit family. In terms of assembly, NDH-1 is composed of 14 different subunits. Subunits NuoB, C, D, E, F, and G constitute the peripheral sector of the complex.

The protein resides in the cell inner membrane. It catalyses the reaction a quinone + NADH + 5 H(+)(in) = a quinol + NAD(+) + 4 H(+)(out). Its function is as follows. NDH-1 shuttles electrons from NADH, via FMN and iron-sulfur (Fe-S) centers, to quinones in the respiratory chain. The immediate electron acceptor for the enzyme in this species is believed to be ubiquinone. Couples the redox reaction to proton translocation (for every two electrons transferred, four hydrogen ions are translocated across the cytoplasmic membrane), and thus conserves the redox energy in a proton gradient. The sequence is that of NADH-quinone oxidoreductase subunit D from Magnetococcus marinus (strain ATCC BAA-1437 / JCM 17883 / MC-1).